The chain runs to 382 residues: Mucosal addressin cell adhesion molecule 1 (382 aa).

The first 18 residues, 1-18, serve as a signal peptide directing secretion; that stretch reads MDFGLALLLAGLLGLLLG. The Extracellular segment spans residues 19–317; sequence QSLQVKPLQV…TGSSKPAGDQ (299 aa). Ig-like domains are found at residues 23-112 and 113-231; these read VKPL…LLVY and AFPD…TSPE. 3 disulfides stabilise this stretch: C47/C94, C51/C98, and C134/C204. N-linked (GlcNAc...) asparagine glycosylation occurs at N83. Positions 223–314 are disordered; the sequence is VLHSPTSPEP…VIPTGSSKPA (92 aa). The interval 226 to 317 is mucin-like; that stretch reads SPTSPEPPDT…TGSSKPAGDQ (92 aa). A 1; truncated repeat occupies 228–231; that stretch reads TSPE. The tract at residues 228-271 is 5.5 X 8 AA tandem repeats of [PS]-P-D-T-T-S-[QP]-E; that stretch reads TSPEPPDTTSPESPDTTSPESPDTTSQEPPDTTSPEPPDKTSPE. A run of 5 repeats spans residues 232 to 239, 240 to 247, 248 to 255, 256 to 263, and 264 to 271. The span at 236–261 shows a compositional bias: low complexity; that stretch reads TSPESPDTTSPESPDTTSQEPPDTTS. Positions 277-288 are enriched in low complexity; it reads GSTHTPRSPGST. A helical membrane pass occupies residues 318–338; the sequence is LPAALWTSSAVLGLLLLALPT. The Cytoplasmic segment spans residues 339-382; sequence YHLWKRCRHLAEDDTHPPASLRLLPQVSAWAGLRGTGQVGISPS.

As to quaternary structure, homodimer. In terms of processing, the Ser/Thr-rich mucin-like domain may provide possible sites for O-glycosylation. In terms of tissue distribution, highly expressed on high endothelial venules (HEV) and lamina propia venules found in the small intestine, and to a lesser extent in the colon and spleen. Very low levels of expression found in pancreas and brain. Not expressed in the thymus, prostate, ovaries, testis, heart, placenta, lung, liver, skeletal muscle, kidney or peripheral blood leukocytes.

It is found in the membrane. Its function is as follows. Cell adhesion leukocyte receptor expressed by mucosal venules, helps to direct lymphocyte traffic into mucosal tissues including the Peyer patches and the intestinal lamina propria. It can bind both integrin alpha-4/beta-7 and L-selectin, regulating both the passage and retention of leukocytes. Isoform 2, lacking the mucin-like domain, may be specialized in supporting integrin alpha-4/beta-7-dependent adhesion strengthening, independent of L-selectin binding. This chain is Mucosal addressin cell adhesion molecule 1 (MADCAM1), found in Homo sapiens (Human).